The following is a 242-amino-acid chain: Octanoyltransferase (242 aa).

The BPL/LPL catalytic domain occupies 31–206 (SQTTDEIWFL…LFLKNFGYNQ (176 aa)). Substrate is bound by residues 70–77 (RGGQVTYH), 137–139 (SIG), and 150–152 (GLA). The active-site Acyl-thioester intermediate is the cysteine 168.

The protein belongs to the LipB family.

The protein localises to the cytoplasm. It carries out the reaction octanoyl-[ACP] + L-lysyl-[protein] = N(6)-octanoyl-L-lysyl-[protein] + holo-[ACP] + H(+). It functions in the pathway protein modification; protein lipoylation via endogenous pathway; protein N(6)-(lipoyl)lysine from octanoyl-[acyl-carrier-protein]: step 1/2. Its function is as follows. Catalyzes the transfer of endogenously produced octanoic acid from octanoyl-acyl-carrier-protein onto the lipoyl domains of lipoate-dependent enzymes. Lipoyl-ACP can also act as a substrate although octanoyl-ACP is likely to be the physiological substrate. The sequence is that of Octanoyltransferase from Coxiella burnetii (strain Dugway 5J108-111).